The primary structure comprises 1368 residues: DNA-directed RNA polymerase subunit beta (1368 aa).

This sequence belongs to the RNA polymerase beta chain family. In terms of assembly, the RNAP catalytic core consists of 2 alpha, 1 beta, 1 beta' and 1 omega subunit. When a sigma factor is associated with the core the holoenzyme is formed, which can initiate transcription.

It catalyses the reaction RNA(n) + a ribonucleoside 5'-triphosphate = RNA(n+1) + diphosphate. DNA-dependent RNA polymerase catalyzes the transcription of DNA into RNA using the four ribonucleoside triphosphates as substrates. In Burkholderia multivorans (strain ATCC 17616 / 249), this protein is DNA-directed RNA polymerase subunit beta.